The following is a 111-amino-acid chain: MIGIVLVLASLLSVGGQLCQKQATRPLTTGGRRRHLMLWLGLALICMGAAMVLWLLVLQTLPVGIAYPMLSLNFVWVTLAAWKIWHEQVPPRHWLGVALIISGIIILGSAA.

Transmembrane regions (helical) follow at residues 38 to 58 (LWLG…LLVL), 61 to 81 (LPVG…TLAA), and 91 to 111 (PRHW…GSAA). Positions 40-109 (LGLALICMGA…IISGIIILGS (70 aa)) constitute an EamA domain.

This sequence belongs to the ArnE family. Heterodimer of ArnE and ArnF.

It localises to the cell inner membrane. It participates in bacterial outer membrane biogenesis; lipopolysaccharide biosynthesis. Its function is as follows. Translocates 4-amino-4-deoxy-L-arabinose-phosphoundecaprenol (alpha-L-Ara4N-phosphoundecaprenol) from the cytoplasmic to the periplasmic side of the inner membrane. This Salmonella heidelberg (strain SL476) protein is Probable 4-amino-4-deoxy-L-arabinose-phosphoundecaprenol flippase subunit ArnE.